Consider the following 92-residue polypeptide: U21-hexatoxin-Hi1a (92 aa).

Residues 1–19 (MKTILSMLIFVALFAAIVG) form the signal peptide. 4 cysteine pairs are disulfide-bonded: Cys-41–Cys-55, Cys-48–Cys-67, Cys-54–Cys-82, and Cys-85–Cys-92.

This sequence belongs to the neurotoxin 21 family. In terms of tissue distribution, expressed by the venom gland.

It localises to the secreted. Potent insecticidal toxin with probable ion channel impairing activity. In vivo, reversibly paralyzes all flies within 30 minutes, even at low dose (0.3 nmol/g). In Hadronyche infensa (Fraser island funnel-web spider), this protein is U21-hexatoxin-Hi1a.